We begin with the raw amino-acid sequence, 454 residues long: Serine--tRNA ligase (454 aa).

Residue 247–249 (TAE) participates in L-serine binding. Residues 278–280 (RKE) and Val294 contribute to the ATP site. Glu301 serves as a coordination point for L-serine. 365-368 (ELAS) lines the ATP pocket. Thr400 serves as a coordination point for L-serine.

The protein belongs to the class-II aminoacyl-tRNA synthetase family. Type-1 seryl-tRNA synthetase subfamily. Homodimer. The tRNA molecule binds across the dimer.

The protein localises to the cytoplasm. It catalyses the reaction tRNA(Ser) + L-serine + ATP = L-seryl-tRNA(Ser) + AMP + diphosphate + H(+). The catalysed reaction is tRNA(Sec) + L-serine + ATP = L-seryl-tRNA(Sec) + AMP + diphosphate + H(+). It functions in the pathway aminoacyl-tRNA biosynthesis; selenocysteinyl-tRNA(Sec) biosynthesis; L-seryl-tRNA(Sec) from L-serine and tRNA(Sec): step 1/1. Functionally, catalyzes the attachment of serine to tRNA(Ser). Is also able to aminoacylate tRNA(Sec) with serine, to form the misacylated tRNA L-seryl-tRNA(Sec), which will be further converted into selenocysteinyl-tRNA(Sec). The sequence is that of Serine--tRNA ligase from Pyrobaculum calidifontis (strain DSM 21063 / JCM 11548 / VA1).